The primary structure comprises 386 residues: Short integuments 2, mitochondrial (386 aa).

Positions 37–207 constitute a CP-type G domain; that stretch reads TRAIRNRLKL…VLDSPGVLVP (171 aa). A DARXP motif motif is present at residues 55-59; it reads DARIP. Residues 81–84 are G4; that stretch reads NKKD. GTP-binding positions include 81–84, 109–110, and 146–151; these read NKKD, NA, and NVGKSA. Positions 109-111 are G5; the sequence is NAH. A G1 region spans residues 143-150; that stretch reads GVPNVGKS. Residues 180–184 are G2; sequence GVTQD. The G3 stretch occupies residues 200 to 203; that stretch reads DSPG. Gly203 is a GTP binding site.

Belongs to the TRAFAC class YlqF/YawG GTPase family. MTG1 subfamily. As to expression, expressed in seedlings, roots, leaves, stems, inflorescences and siliques.

It is found in the mitochondrion. Its function is as follows. GTPase that may function in mitochondrial ribosome assembly. Involved in a variety of growth processes during vegetative development and promotes growth and cell division in the developing integuments. The chain is Short integuments 2, mitochondrial from Arabidopsis thaliana (Mouse-ear cress).